The following is a 47-amino-acid chain: Large ribosomal subunit protein uL14c (47 aa).

It belongs to the universal ribosomal protein uL14 family. In terms of assembly, part of the 50S ribosomal subunit.

The protein localises to the plastid. The protein resides in the chloroplast. Its function is as follows. Binds to 23S rRNA. This Vigna unguiculata (Cowpea) protein is Large ribosomal subunit protein uL14c (rpl14).